Here is a 150-residue protein sequence, read N- to C-terminus: Putative TBC1 domain family member 29 (150 aa).

In terms of domain architecture, Rab-GAP TBC; truncated spans 1–43; the sequence is MGHLDKEGLCTQGSSFSWLLRVLNDGISLGLTPCLWDMYLLEG. The span at 102-111 shows a compositional bias: polar residues; sequence ESSRGPSLLQ. The tract at residues 102–125 is disordered; that stretch reads ESSRGPSLLQTPPRVPGQQALSRG.

The sequence is that of Putative TBC1 domain family member 29 from Homo sapiens (Human).